The chain runs to 414 residues: uncharacterized protein (414 aa).

Belongs to the UbiH/COQ6 family. It depends on FAD as a cofactor.

This is an uncharacterized protein from Synechocystis sp. (strain ATCC 27184 / PCC 6803 / Kazusa).